Here is a 456-residue protein sequence, read N- to C-terminus: Probable glycine dehydrogenase (decarboxylating) subunit 1 (456 aa).

This sequence belongs to the GcvP family. N-terminal subunit subfamily. As to quaternary structure, the glycine cleavage system is composed of four proteins: P, T, L and H. In this organism, the P 'protein' is a heterodimer of two subunits.

It carries out the reaction N(6)-[(R)-lipoyl]-L-lysyl-[glycine-cleavage complex H protein] + glycine + H(+) = N(6)-[(R)-S(8)-aminomethyldihydrolipoyl]-L-lysyl-[glycine-cleavage complex H protein] + CO2. In terms of biological role, the glycine cleavage system catalyzes the degradation of glycine. The P protein binds the alpha-amino group of glycine through its pyridoxal phosphate cofactor; CO(2) is released and the remaining methylamine moiety is then transferred to the lipoamide cofactor of the H protein. In Legionella pneumophila (strain Corby), this protein is Probable glycine dehydrogenase (decarboxylating) subunit 1.